A 224-amino-acid polypeptide reads, in one-letter code: Ribonuclease HII (224 aa).

One can recognise an RNase H type-2 domain in the interval 7–217 (STIMGIDEAG…SNAVIADCLQ (211 aa)). A divalent metal cation-binding residues include Asp-13, Glu-14, and Asp-111.

This sequence belongs to the RNase HII family. Requires Mn(2+) as cofactor. It depends on Mg(2+) as a cofactor.

The protein resides in the cytoplasm. It carries out the reaction Endonucleolytic cleavage to 5'-phosphomonoester.. Its function is as follows. Endonuclease that specifically degrades the RNA of RNA-DNA hybrids. The sequence is that of Ribonuclease HII from Methanocella arvoryzae (strain DSM 22066 / NBRC 105507 / MRE50).